The primary structure comprises 1640 residues: Basal body protein 10 (1640 aa).

A homodimerization region spans residues 11–64 (VLRRKLEALGYSDPLEPASLQLVQKLVEDLVHTTDSYTAVKQQCAKQAQEIAAF). Residues 93-148 (AERHEREAREHYTAVKRLEDTIAELSYWKHAAAEKLASADKENAGLRKRCEELAKL) adopt a coiled-coil conformation. Residues 154–185 (SGAATPQSVAPKISSRSPIRVAPPPSPPRPRQ) form a disordered region. A compositionally biased stretch (pro residues) spans 174 to 183 (VAPPPSPPRP). Coiled-coil stretches lie at residues 191–232 (LQAA…RDVE), 260–332 (ILQL…LQDT), 370–411 (VERL…AQSR), 461–722 (FAAL…AEAD), 758–960 (ARQM…AQAA), 1010–1030 (GEAL…LVRE), 1059–1086 (RASA…LAAE), 1129–1282 (INQY…LQAS), 1323–1494 (AKDQ…AERD), and 1523–1557 (AELA…TRAT). A compositionally biased stretch (low complexity) spans 1592–1618 (GQGQVQGPAGTAPAAAAGAPGPQPGQA). A disordered region spans residues 1592-1640 (GQGQVQGPAGTAPAAAAGAPGPQPGQAQAGGFGGAHGGGSISLSGGPRR). Residues 1619–1631 (QAGGFGGAHGGGS) show a composition bias toward gly residues.

This sequence belongs to the CEP135/TSGA10 family. As to quaternary structure, homodimer.

Its subcellular location is the cytoplasm. It localises to the cytoskeleton. It is found in the microtubule organizing center. The protein resides in the centrosome. The protein localises to the centriole. In terms of biological role, microtubule-binding protein essential for cytoskeletal organization (e.g. rootlet microtubule bundles) and flagellar basal body/centriole assembly. The protein is Basal body protein 10 of Chlamydomonas reinhardtii (Chlamydomonas smithii).